The following is a 287-amino-acid chain: Elongation factor Ts (287 aa).

Residues 80 to 83 (TDFL) are involved in Mg(2+) ion dislocation from EF-Tu.

The protein belongs to the EF-Ts family.

The protein resides in the cytoplasm. Associates with the EF-Tu.GDP complex and induces the exchange of GDP to GTP. It remains bound to the aminoacyl-tRNA.EF-Tu.GTP complex up to the GTP hydrolysis stage on the ribosome. The polypeptide is Elongation factor Ts (Pseudomonas entomophila (strain L48)).